A 582-amino-acid chain; its full sequence is Formate--tetrahydrofolate ligase (582 aa).

65–72 (TPLGEGKT) serves as a coordination point for ATP.

Belongs to the formate--tetrahydrofolate ligase family.

The catalysed reaction is (6S)-5,6,7,8-tetrahydrofolate + formate + ATP = (6R)-10-formyltetrahydrofolate + ADP + phosphate. It functions in the pathway one-carbon metabolism; tetrahydrofolate interconversion. This is Formate--tetrahydrofolate ligase from Vibrio atlanticus (strain LGP32) (Vibrio splendidus (strain Mel32)).